The primary structure comprises 331 residues: Mitochondrial respiration co-chaperone MRJ1 (331 aa).

A mitochondrion-targeting transit peptide spans 1–36 (MLSFQATVRPLAVSSRLHSPAAHIWRRNAHTAAMSD). The segment at 35–66 (SDDSLDQGSSSSYGDSASQPHLGKGKGRQDSL) is disordered. Residues 40–53 (DQGSSSSYGDSASQ) show a composition bias toward low complexity. The J domain occupies 83–147 (DPFEVMALDR…SSRSAFLKTG (65 aa)). The tract at residues 203–226 (DGSQGWRPYEDPSKGFSPPTSGPA) is disordered. The IQ domain occupies 275–303 (RALAQARYEAATHGHIRREQIRRRVREAE).

This sequence belongs to the DnaJ family. In terms of assembly, interacts with QCR2.

Its subcellular location is the mitochondrion. Functionally, mitochondrial co-chaperone required for ubiquinol-cytochrome c oxidoreductase (mitochondrial respiratory chain complex III) activity. The chain is Mitochondrial respiration co-chaperone MRJ1 from Cryptococcus neoformans var. grubii serotype A (strain H99 / ATCC 208821 / CBS 10515 / FGSC 9487) (Filobasidiella neoformans var. grubii).